The following is a 280-amino-acid chain: NAD kinase (280 aa).

Catalysis depends on D60, which acts as the Proton acceptor. NAD(+)-binding positions include 60 to 61 (DG), 134 to 135 (ND), R145, D164, 175 to 180 (TAYSLS), and Q234.

It belongs to the NAD kinase family. A divalent metal cation is required as a cofactor.

The protein localises to the cytoplasm. It carries out the reaction NAD(+) + ATP = ADP + NADP(+) + H(+). In terms of biological role, involved in the regulation of the intracellular balance of NAD and NADP, and is a key enzyme in the biosynthesis of NADP. Catalyzes specifically the phosphorylation on 2'-hydroxyl of the adenosine moiety of NAD to yield NADP. The protein is NAD kinase of Carboxydothermus hydrogenoformans (strain ATCC BAA-161 / DSM 6008 / Z-2901).